Here is a 385-residue protein sequence, read N- to C-terminus: Cytochrome b (385 aa).

The next 4 helical transmembrane spans lie at 34 to 54 (FGSILGLCLFLQIATGLILTM), 78 to 99 (WFIRNFHITGASLFFSCMFIHI), 114 to 134 (WYSGVILFICAMVTAFFGYVL), and 179 to 199 (FLVLHFLVPFLMIAVSLTHLL). Heme b contacts are provided by His-84 and His-98. Heme b contacts are provided by His-183 and His-197. Residue His-202 coordinates a ubiquinone. 4 helical membrane passes run 227-247 (FKDILGFLITLSLIFLGSTLF), 289-309 (LMGVFALIMSLSVLLFMPFLI), 321-341 (FMQFTFWLMISNFILLSWLGA), and 348-368 (YTIMSQVTSFLYFFIFLFLFP).

This sequence belongs to the cytochrome b family. In terms of assembly, the cytochrome bc1 complex contains 3 respiratory subunits (MT-CYB, CYC1 and UQCRFS1), 2 core proteins (UQCRC1 and UQCRC2) and probably 6 low-molecular weight proteins. It depends on heme b as a cofactor.

It is found in the mitochondrion inner membrane. Component of the ubiquinol-cytochrome c reductase complex (complex III or cytochrome b-c1 complex) that is part of the mitochondrial respiratory chain. The b-c1 complex mediates electron transfer from ubiquinol to cytochrome c. Contributes to the generation of a proton gradient across the mitochondrial membrane that is then used for ATP synthesis. This Myxine glutinosa (Atlantic hagfish) protein is Cytochrome b (MT-CYB).